A 515-amino-acid polypeptide reads, in one-letter code: Monocarboxylate transporter 10 (515 aa).

The interval 1–48 is disordered; it reads MVLSQEEPDSARGTSEAQPLGPAPTGAAPPPGPGPSDSPEAAVEKVEV. At 1 to 66 the chain is on the cytoplasmic side; that stretch reads MVLSQEEPDS…EPHEPPEPPE (66 aa). The span at 17-26 shows a compositional bias: low complexity; that stretch reads AQPLGPAPTG. Residues 27–36 show a composition bias toward pro residues; the sequence is AAPPPGPGPS. Residues 67-87 form a helical membrane-spanning segment; the sequence is GGWGWLVMLAAMWCNGSVFGI. At 88–114 the chain is on the extracellular side; sequence QNACGVLFVSMLETFGSKDDDKMVFKT. Residues 115 to 135 form a helical membrane-spanning segment; sequence AWVGSLSMGMIFFCCPIVSVF. Residues 136-144 are Cytoplasmic-facing; the sequence is TDLFGCRKT. The helical transmembrane segment at 145-165 threads the bilayer; the sequence is AVVGAAVGFVGLMSSSFVSSI. Residues 166 to 171 lie on the Extracellular side of the membrane; that stretch reads EPLYLT. A helical transmembrane segment spans residues 172-192; it reads YGIIFACGCSFAYQPSLVILG. Over 193-200 the chain is Cytoplasmic; it reads HYFKKRLG. A helical transmembrane segment spans residues 201–221; it reads LVNGIVTAGSSVFTILLPLLL. Topologically, residues 222-228 are extracellular; that stretch reads RVLIDSV. Residues 229–249 form a helical membrane-spanning segment; sequence GLFYTLRVLCIFMFVLFLAGF. Topologically, residues 250-291 are cytoplasmic; it reads TYRPLATSTKDKESGGSGSSLFSRKKFSPPKKIFNFAIFKVT. The residue at position 263 (S263) is a Phosphoserine. A helical transmembrane segment spans residues 292-312; the sequence is AYAVWAVGIPLALFGYFVPYV. The Extracellular portion of the chain corresponds to 313-329; that stretch reads HLMKHVNERFQDEKNKE. Residues 330–350 form a helical membrane-spanning segment; that stretch reads VVLMCIGVTSGVGRLLFGRIA. Position 351 (D351) is a topological domain, cytoplasmic. The chain crosses the membrane as a helical span at residues 352–372; the sequence is YVPGVKKVYLQVLSFFFIGLM. Topologically, residues 373-396 are extracellular; that stretch reads SMMIPLCSIFGALIAVCLIMGLFD. The helical transmembrane segment at 397 to 417 threads the bilayer; sequence GCFISIMAPIAFELVGAQDVS. Over 418–419 the chain is Cytoplasmic; sequence QA. The chain crosses the membrane as a helical span at residues 420–440; that stretch reads IGFLLGFMSIPMTVGPPIAGL. At 441 to 451 the chain is on the extracellular side; that stretch reads LRDKLGSYDVA. A helical transmembrane segment spans residues 452-472; the sequence is FYLAGVPPLIGGAVLCFIPWI. The Cytoplasmic portion of the chain corresponds to 473–515; that stretch reads HSKKQREISKTTGKEKMEKMLENQNSLLSSSSGMFKKESDSII. A phosphoserine mark is found at S498, S501, S503, and S504.

The protein belongs to the major facilitator superfamily. Monocarboxylate porter (TC 2.A.1.13) family. Post-translationally, not N-glycosylated. In terms of tissue distribution, strongly expressed in kidney and skeletal muscle and at lower level in placenta and heart.

The protein localises to the cell membrane. The protein resides in the basolateral cell membrane. It catalyses the reaction 3,3',5-triiodo-L-thyronine(out) = 3,3',5-triiodo-L-thyronine(in). The enzyme catalyses L-thyroxine(out) = L-thyroxine(in). The catalysed reaction is L-tryptophan(in) = L-tryptophan(out). It carries out the reaction L-tyrosine(in) = L-tyrosine(out). It catalyses the reaction L-phenylalanine(in) = L-phenylalanine(out). Functionally, sodium- and proton-independent thyroid hormones and aromatic acids transporter. Mediates both uptake and efflux of 3,5,3'-triiodothyronine (T3) and 3,5,3',5'-tetraiodothyronine (T4) with high affinity, suggesting a role in the homeostasis of thyroid hormone levels. Responsible for low affinity bidirectional transport of the aromatic amino acids, such as phenylalanine, tyrosine, tryptophan and L-3,4-dihydroxyphenylalanine (L-dopa). Plays an important role in homeostasis of aromatic amino acids. The sequence is that of Monocarboxylate transporter 10 (SLC16A10) from Homo sapiens (Human).